We begin with the raw amino-acid sequence, 303 residues long: Glycine--tRNA ligase alpha subunit (303 aa).

This sequence belongs to the class-II aminoacyl-tRNA synthetase family. As to quaternary structure, tetramer of two alpha and two beta subunits.

It is found in the cytoplasm. The catalysed reaction is tRNA(Gly) + glycine + ATP = glycyl-tRNA(Gly) + AMP + diphosphate. The chain is Glycine--tRNA ligase alpha subunit from Salmonella arizonae (strain ATCC BAA-731 / CDC346-86 / RSK2980).